The primary structure comprises 184 residues: Cell number regulator 5 (184 aa).

The helical transmembrane segment at 91 to 111 (MLWGLLTSLCCVFTGGLVLAV) threads the bilayer. A disordered region spans residues 162 to 184 (RTGSGSSPAPNVTPPPVQTMDEL).

The protein belongs to the cornifelin family. Expressed in roots, leaves, stalks, immature ears, endosperm and pollen.

It localises to the membrane. This Zea mays (Maize) protein is Cell number regulator 5 (CNR5).